The primary structure comprises 308 residues: Acetaldehyde dehydrogenase (308 aa).

14-17 (TGNI) lines the NAD(+) pocket. Cys129 serves as the catalytic Acyl-thioester intermediate. NAD(+)-binding positions include 160–168 (SAGPGTRQN) and Asn280.

It belongs to the acetaldehyde dehydrogenase family.

It catalyses the reaction acetaldehyde + NAD(+) + CoA = acetyl-CoA + NADH + H(+). This is Acetaldehyde dehydrogenase from Thermomicrobium roseum (strain ATCC 27502 / DSM 5159 / P-2).